A 377-amino-acid chain; its full sequence is D-alanine--D-alanine ligase (377 aa).

One can recognise an ATP-grasp domain in the interval 140–349 (KELLTVNGIR…NAKLVDMLID (210 aa)). 170 to 225 (VAELGNIVFVKAANQGSSVGISRVTNAEEYTEALSDSFQYDYKVLIEEAVNGAREL) provides a ligand contact to ATP. 3 residues coordinate Mg(2+): Asp303, Glu316, and Asn318.

It belongs to the D-alanine--D-alanine ligase family. The cofactor is Mg(2+). Mn(2+) is required as a cofactor.

It is found in the cytoplasm. It catalyses the reaction 2 D-alanine + ATP = D-alanyl-D-alanine + ADP + phosphate + H(+). It participates in cell wall biogenesis; peptidoglycan biosynthesis. Its function is as follows. Cell wall formation. In Leuconostoc mesenteroides, this protein is D-alanine--D-alanine ligase.